The primary structure comprises 173 residues: MKSKKIFKILTLLLPMITTFSCSFPKNKLNSNNVDTFYEQETNKSKQQLTNFSEDNFDETLEKLKKGNTIYFPFNNHQVNSKYAKNLNDLAQFLCHHSNQKIMIEGHTDSRGTNKYNMYLGQKRADSVKLYLESKGVSNQQITTVSYGSSKPVAHGNKENSYSKNRRSVIIYQ.

The first 21 residues, Met1–Ser21, serve as a signal peptide directing secretion. Residue Cys22 is the site of N-palmitoyl cysteine attachment. The S-diacylglycerol cysteine moiety is linked to residue Cys22. Residues Glu59–Gln173 form the OmpA-like domain.

It belongs to the Pal lipoprotein family.

The protein resides in the cell outer membrane. This is Peptidoglycan-associated lipoprotein from Buchnera aphidicola subsp. Baizongia pistaciae (strain Bp).